The sequence spans 544 residues: Phosphomannomutase (544 aa).

S145 acts as the Phosphoserine intermediate in catalysis. Residues S145, D297, D299, and D301 each contribute to the Mg(2+) site.

The protein belongs to the phosphohexose mutase family. Mg(2+) is required as a cofactor.

The enzyme catalyses alpha-D-mannose 1-phosphate = D-mannose 6-phosphate. The chain is Phosphomannomutase (manB) from Mycoplasmoides pirum (Mycoplasma pirum).